Consider the following 287-residue polypeptide: NAD kinase (287 aa).

Catalysis depends on Asp66, which acts as the Proton acceptor. Residues 66-67, 137-138, Arg148, Arg165, Asp167, and 178-183 each bind NAD(+); these read DG, ND, and TAYSMS.

The protein belongs to the NAD kinase family. A divalent metal cation is required as a cofactor.

It localises to the cytoplasm. The catalysed reaction is NAD(+) + ATP = ADP + NADP(+) + H(+). In terms of biological role, involved in the regulation of the intracellular balance of NAD and NADP, and is a key enzyme in the biosynthesis of NADP. Catalyzes specifically the phosphorylation on 2'-hydroxyl of the adenosine moiety of NAD to yield NADP. This chain is NAD kinase, found in Chlorobium limicola (strain DSM 245 / NBRC 103803 / 6330).